We begin with the raw amino-acid sequence, 482 residues long: Glutamyl-tRNA(Gln) amidotransferase subunit A (482 aa).

Active-site charge relay system residues include Lys-75 and Ser-150. The Acyl-ester intermediate role is filled by Ser-174.

Belongs to the amidase family. GatA subfamily. Heterotrimer of A, B and C subunits.

The enzyme catalyses L-glutamyl-tRNA(Gln) + L-glutamine + ATP + H2O = L-glutaminyl-tRNA(Gln) + L-glutamate + ADP + phosphate + H(+). Its function is as follows. Allows the formation of correctly charged Gln-tRNA(Gln) through the transamidation of misacylated Glu-tRNA(Gln) in organisms which lack glutaminyl-tRNA synthetase. The reaction takes place in the presence of glutamine and ATP through an activated gamma-phospho-Glu-tRNA(Gln). The chain is Glutamyl-tRNA(Gln) amidotransferase subunit A from Acaryochloris marina (strain MBIC 11017).